Here is a 101-residue protein sequence, read N- to C-terminus: Large ribosomal subunit protein uL24 (101 aa).

This sequence belongs to the universal ribosomal protein uL24 family. Part of the 50S ribosomal subunit.

One of two assembly initiator proteins, it binds directly to the 5'-end of the 23S rRNA, where it nucleates assembly of the 50S subunit. In terms of biological role, one of the proteins that surrounds the polypeptide exit tunnel on the outside of the subunit. This Ruegeria sp. (strain TM1040) (Silicibacter sp.) protein is Large ribosomal subunit protein uL24.